The chain runs to 71 residues: MRKSFYTWLMTQRHPKSHDPVAILADLVFEDTTFPKHTDSFERVSRYLEDEASFSFNLSEFDRIWEDYLAH.

It belongs to the UPF0346 family.

The chain is UPF0346 protein SMU_1621c from Streptococcus mutans serotype c (strain ATCC 700610 / UA159).